We begin with the raw amino-acid sequence, 37 residues long: Large ribosomal subunit protein bL36B (37 aa).

The protein belongs to the bacterial ribosomal protein bL36 family.

This chain is Large ribosomal subunit protein bL36B, found in Kineococcus radiotolerans (strain ATCC BAA-149 / DSM 14245 / SRS30216).